We begin with the raw amino-acid sequence, 1062 residues long: Inversin (1062 aa).

16 ANK repeats span residues 13-42 (SLASQVHAAAVNGDKGALQRLIVGNSALRD), 47-76 (FGRTPLMYCVLADRVDCADALLKAGADVNK), 80-110 (SRRTALHLAAQKGNYRFMKLLLTRRANWMQK), 113-144 (EEMTPLHLSTRHRSPKCLALLLKFMAPGEVDT), 148-177 (NKQTALHWSAYYNNPEHAKLLIKHDSNIGI), 181-213 (EGKIPLHWAANHKDPSAVHTVRCILDAAPTESL), 220-250 (EGRTPLHFAVADGNLTVVDVLTSYESCNITS), 254-283 (LFRTPLHWAALLGHAQIVHLLLERNKSGTI), 288-317 (QGATPLHYAAQSNFAETVKVFLQHPSVKDD), 321-350 (EGRTSFMWAAGKGNDDVLRTMLSLKSDIDI), 356-385 (YGGTALHAAALSGHVSTVKLLLDNDAQVDA), 389-418 (MKHTPLFRACEMGHRDVIQTLIKGGARVDL), 422-451 (DGHSLLHWAALGGNADVCQILIENKINPNV), 455-484 (AGRTPLQCAAYGGYINCMAVLMENNADPNI), 488-517 (EGRTALHWSCNNGYLDAIKLLLDFAAFPNQ), and 523-553 (ERYTPLDYALLGERHEVIQFMLEHGALSIAA). N75 carries the 3-hydroxyasparagine modification. A D-box 1 motif is present at residues 490–498 (RTALHWSCN). The IQ 1 domain maps to 555 to 584 (QDIAAFKIQAVYKGYKVRKAFRDRKNLLMK). Residues 589–608 (RKDAAAKKREEENKRKEAEQ) are compositionally biased toward basic and acidic residues. Positions 589 to 849 (RKDAAAKKRE…QDKLIGGVSS (261 aa)) are disordered. Polar residues-rich tracts occupy residues 636–658 (QNEGSKQDATPSKQPPASHTVQS) and 676–689 (QGDSSIDLQGTASR). Positions 690–700 (KPSETPIEHCR) are enriched in basic and acidic residues. Polar residues predominate over residues 713 to 724 (GGNSSKNQGTSS). Basic and acidic residues-rich tracts occupy residues 725-741 (VEKRRGETNGKHRRCEE) and 775-788 (DHPRKPNKRQDRAA). The D-box 2 signature appears at 907 to 915 (RKELFRRKN). The IQ 2 domain occupies 914-943 (KNKAAAVIQRAWRSYQLRKHLSRLLHLKQL). The tract at residues 1042-1062 (RSKKFSYNLQPSSQSKNKPKL) is disordered. Polar residues predominate over residues 1046–1062 (FSYNLQPSSQSKNKPKL).

In terms of assembly, interacts with microtubules. Interacts with NPHP1. Interacts with DVL1, PRICKLE (PRICKLE1 or PRICKLE2) and Strabismus (VANGL1 or VANGL2). Binds calmodulin via its IQ domains. Interacts with APC2. Interacts with alpha-, beta-, and gamma-catenin. Interacts with N-cadherin (CDH2). Interacts with NPHP3. Interacts with IQCB1; the interaction likely requires additional interactors. Component of a complex containing at least ANKS6, INVS, NEK8 and NPHP3. ANKS6 may organize complex assembly by linking INVS and NPHP3 to NEK8 and INVS may target the complex to the proximal ciliary axoneme. Post-translationally, may be ubiquitinated via its interaction with APC2. In terms of processing, hydroxylated at Asn-75, most probably by HIF1AN. In terms of tissue distribution, strongly expressed in the primary cilia of renal cells, especially in the varicosities, swellings observed in the cilia. Localizes in the node monocilia and in other 9+0 monocilia, including those of kidney epithelial cells and the pituitary gland, but it does not localize to 9+2 cilia (at protein level). In adult, it is expressed at high level in liver and kidney. Weakly or not expressed in other tissues.

The protein localises to the cytoplasm. It is found in the cytoskeleton. The protein resides in the membrane. It localises to the nucleus. Its subcellular location is the perinuclear region. The protein localises to the spindle. Required for normal renal development and establishment of left-right axis. Probably acts as a molecular switch between different Wnt signaling pathways. Inhibits the canonical Wnt pathway by targeting cytoplasmic disheveled (DVL1) for degradation by the ubiquitin-proteasome. This suggests that it is required in renal development to oppose the repression of terminal differentiation of tubular epithelial cells by Wnt signaling. Involved in the organization of apical junctions in kidney cells together with NPHP1, NPHP4 and RPGRIP1L/NPHP8. Does not seem to be strictly required for ciliogenesis. In Mus musculus (Mouse), this protein is Inversin (Invs).